A 242-amino-acid polypeptide reads, in one-letter code: Ribosomal RNA small subunit methyltransferase G (242 aa).

S-adenosyl-L-methionine-binding positions include Gly78, Leu83, 130 to 131, and Arg151; that span reads AE.

Belongs to the methyltransferase superfamily. RNA methyltransferase RsmG family.

It is found in the cytoplasm. In terms of biological role, specifically methylates the N7 position of guanine in position 518 of 16S rRNA. This chain is Ribosomal RNA small subunit methyltransferase G, found in Salinispora tropica (strain ATCC BAA-916 / DSM 44818 / JCM 13857 / NBRC 105044 / CNB-440).